We begin with the raw amino-acid sequence, 1358 residues long: DNA-directed RNA polymerase subunit beta (1358 aa).

It belongs to the RNA polymerase beta chain family. In terms of assembly, the RNAP catalytic core consists of 2 alpha, 1 beta, 1 beta' and 1 omega subunit. When a sigma factor is associated with the core the holoenzyme is formed, which can initiate transcription.

The catalysed reaction is RNA(n) + a ribonucleoside 5'-triphosphate = RNA(n+1) + diphosphate. Functionally, DNA-dependent RNA polymerase catalyzes the transcription of DNA into RNA using the four ribonucleoside triphosphates as substrates. The chain is DNA-directed RNA polymerase subunit beta from Francisella tularensis subsp. holarctica (strain LVS).